The chain runs to 276 residues: Prohibitin 1 (276 aa).

Belongs to the prohibitin family.

Required for larval metabolism or for the progression of the larva into a pupa. The sequence is that of Prohibitin 1 from Drosophila melanogaster (Fruit fly).